Here is a 194-residue protein sequence, read N- to C-terminus: Adenylate kinase (194 aa).

8 to 16 (GIPGVGKST) contacts ATP.

The protein belongs to the archaeal adenylate kinase family. Homotrimer.

Its subcellular location is the cytoplasm. It carries out the reaction AMP + ATP = 2 ADP. This chain is Adenylate kinase (adkA), found in Sulfolobus acidocaldarius (strain ATCC 33909 / DSM 639 / JCM 8929 / NBRC 15157 / NCIMB 11770).